We begin with the raw amino-acid sequence, 364 residues long: Photoreceptor outer segment membrane glycoprotein 2 (364 aa).

Residues 1–24 (MTVLKVKFTKTKRDKLAQILWILN) lie on the Cytoplasmic side of the membrane. Residues 25-43 (WVSVVSGIILFSLGLFLKI) form a helical membrane-spanning segment. Residues 44-61 (EIKKRNEVMAKGDINSVP) lie on the Lumenal side of the membrane. A helical transmembrane segment spans residues 62–80 (NMLISVGVIACVVNFLGGK). The Cytoplasmic segment spans residues 81–99 (ICYDCSDANKFSRWKLIML). A helical membrane pass occupies residues 100 to 123 (PYIICTFCFTFCILLGALMCYTMR). Residues 124-264 (NELEESLYLG…LEYYTAIMRS (141 aa)) are Lumenal-facing. N-linked (GlcNAc...) asparagine glycosylation occurs at asparagine 229. A helical membrane pass occupies residues 265-290 (IGIAALLIWLFELSVLIGVRYLQTAM). Over 291 to 364 (KNVLLQGDLQ…VTAKSIPAAS (74 aa)) the chain is Cytoplasmic.

Belongs to the PRPH2/ROM1 family.

It localises to the membrane. This Gallus gallus (Chicken) protein is Photoreceptor outer segment membrane glycoprotein 2.